The sequence spans 331 residues: MTEVDDGCGGRLRGSVLLEDECDLKQECETPTHSLVQGRDPPVVVVWRNVVLMSVLHTAAVYGLVLLPSASAYTLLAFCFVSSALGITAGAHRLWSHRSYKASLPLRIFLAVANSMGFQNDIYEWARDHRVHHKYSETDADPHNASRGFFFAHIGWLLVKKHPKVIENGQKLELSDLKNDRVVMFQRRFYKHSVVVMCFLIPAMLPWFLWAESLWVGYFVPVLLRYALVLNATWLVNSAAHMWGNQPYDVNINPRENRFVTFSAIGEGFHNYHHTFPYDYATSEFGCRLNLTTCFINLMCVLGLAKDCRRVPTELVMARVKRTGDGSHRSG.

The Cytoplasmic segment spans residues 1 to 46 (MTEVDDGCGGRLRGSVLLEDECDLKQECETPTHSLVQGRDPPVVVV). A helical membrane pass occupies residues 47–67 (WRNVVLMSVLHTAAVYGLVLL). Position 49 (N49) interacts with substrate. The Lumenal portion of the chain corresponds to 68–71 (PSAS). Residues 72 to 90 (AYTLLAFCFVSSALGITAG) traverse the membrane as a helical segment. The Cytoplasmic portion of the chain corresponds to 91–189 (AHRLWSHRSY…DRVVMFQRRF (99 aa)). Fe cation is bound by residues H92 and H97. A Histidine box-1 motif is present at residues 92 to 97 (HRLWSH). Substrate-binding residues include N120, R127, and D128. H129, H132, and H133 together coordinate Fe cation. The short motif at 129-133 (HRVHH) is the Histidine box-2 element. A substrate-binding site is contributed by K161. The chain crosses the membrane as a helical span at residues 190–209 (YKHSVVVMCFLIPAMLPWFL). Over 210–213 (WAES) the chain is Lumenal. The helical transmembrane segment at 214 to 235 (LWVGYFVPVLLRYALVLNATWL) threads the bilayer. W234 is a binding site for substrate. The Cytoplasmic portion of the chain corresponds to 236–331 (VNSAAHMWGN…RTGDGSHRSG (96 aa)). Residues H241, H270, H273, and H274 each contribute to the Fe cation site. Residues 270–274 (HNYHH) carry the Histidine box-3 motif.

Belongs to the fatty acid desaturase type 1 family. It depends on Fe(2+) as a cofactor. As to expression, expression is highest in liver, followed by brain and intestine, and lowest in spleen. Also expressed in heart, gill and muscle.

Its subcellular location is the endoplasmic reticulum membrane. It catalyses the reaction octadecanoyl-CoA + 2 Fe(II)-[cytochrome b5] + O2 + 2 H(+) = (9Z)-octadecenoyl-CoA + 2 Fe(III)-[cytochrome b5] + 2 H2O. Its function is as follows. Stearoyl-CoA desaturase that utilizes O(2) and electrons from reduced cytochrome b5 to introduce the first double bond into saturated fatty acyl-CoA substrates. Catalyzes the insertion of a cis double bond at the delta-9 position into fatty acyl-CoA substrates including palmitoyl-CoA and stearoyl-CoA. Contributes to the biosynthesis of membrane phospholipids, cholesterol esters and triglycerides. This is Acyl-CoA desaturase 1 from Tachysurus fulvidraco (Yellow catfish).